Consider the following 185-residue polypeptide: Peptidyl-tRNA hydrolase (185 aa).

Tyr-14 serves as a coordination point for tRNA. The Proton acceptor role is filled by His-19. Positions 65, 67, and 113 each coordinate tRNA.

The protein belongs to the PTH family. In terms of assembly, monomer.

It is found in the cytoplasm. The catalysed reaction is an N-acyl-L-alpha-aminoacyl-tRNA + H2O = an N-acyl-L-amino acid + a tRNA + H(+). Functionally, hydrolyzes ribosome-free peptidyl-tRNAs (with 1 or more amino acids incorporated), which drop off the ribosome during protein synthesis, or as a result of ribosome stalling. Its function is as follows. Catalyzes the release of premature peptidyl moieties from peptidyl-tRNA molecules trapped in stalled 50S ribosomal subunits, and thus maintains levels of free tRNAs and 50S ribosomes. The sequence is that of Peptidyl-tRNA hydrolase from Rickettsia conorii (strain ATCC VR-613 / Malish 7).